Here is a 76-residue protein sequence, read N- to C-terminus: Putative defensin-like protein 62 (76 aa).

The N-terminal stretch at methionine 1 to glutamine 26 is a signal peptide. 4 cysteine pairs are disulfide-bonded: cysteine 30–cysteine 71, cysteine 34–cysteine 57, cysteine 43–cysteine 69, and cysteine 47–cysteine 70.

The protein belongs to the DEFL family.

The protein resides in the secreted. The protein is Putative defensin-like protein 62 of Arabidopsis thaliana (Mouse-ear cress).